We begin with the raw amino-acid sequence, 206 residues long: Small ribosomal subunit protein uS4 (206 aa).

The region spanning Gly96–Lys156 is the S4 RNA-binding domain.

Belongs to the universal ribosomal protein uS4 family. As to quaternary structure, part of the 30S ribosomal subunit. Contacts protein S5. The interaction surface between S4 and S5 is involved in control of translational fidelity.

Functionally, one of the primary rRNA binding proteins, it binds directly to 16S rRNA where it nucleates assembly of the body of the 30S subunit. With S5 and S12 plays an important role in translational accuracy. The sequence is that of Small ribosomal subunit protein uS4 from Yersinia enterocolitica serotype O:8 / biotype 1B (strain NCTC 13174 / 8081).